We begin with the raw amino-acid sequence, 326 residues long: 2-dehydropantoate 2-reductase (326 aa).

Residues 7–12 and asparagine 103 each bind NADP(+); that span reads GAGAIG. Asparagine 103 is a binding site for substrate. Lysine 205 serves as the catalytic Proton donor. Positions 209, 213, and 274 each coordinate substrate. Glutamate 286 lines the NADP(+) pocket.

The protein belongs to the ketopantoate reductase family.

The protein resides in the cytoplasm. The catalysed reaction is (R)-pantoate + NADP(+) = 2-dehydropantoate + NADPH + H(+). The protein operates within cofactor biosynthesis; (R)-pantothenate biosynthesis; (R)-pantoate from 3-methyl-2-oxobutanoate: step 2/2. In terms of biological role, catalyzes the NADPH-dependent reduction of ketopantoate into pantoic acid. In Mesorhizobium japonicum (strain LMG 29417 / CECT 9101 / MAFF 303099) (Mesorhizobium loti (strain MAFF 303099)), this protein is 2-dehydropantoate 2-reductase.